Reading from the N-terminus, the 405-residue chain is SPbeta prophage-derived uncharacterized protein YonJ (405 aa).

Residues 72–101 (DESNNSLLELELKKVEIMEERKKLQAVKHE) adopt a coiled-coil conformation.

The protein is SPbeta prophage-derived uncharacterized protein YonJ (yonJ) of Bacillus subtilis (strain 168).